Here is a 549-residue protein sequence, read N- to C-terminus: Carboxylesterase 1C (549 aa).

Positions 1–18 are cleaved as a signal peptide; it reads MWLCALVWASLAVCPIWG. N-linked (GlcNAc...) asparagine glycosylation occurs at Asn-79. Cys-87 and Cys-116 are joined by a disulfide. Catalysis depends on Ser-221, which acts as the Acyl-ester intermediate. A disulfide bond links Cys-273 and Cys-284. N-linked (GlcNAc...) asparagine glycans are attached at residues Asn-274, Asn-275, and Asn-302. Glu-340 serves as the catalytic Charge relay system. N-linked (GlcNAc...) asparagine glycosylation is present at Asn-375. The active-site Charge relay system is the His-453. Phosphoserine is present on Ser-471. N-linked (GlcNAc...) asparagine glycosylation occurs at Asn-476. A Prevents secretion from ER motif is present at residues 546-549; sequence TEHT.

It belongs to the type-B carboxylesterase/lipase family.

Its subcellular location is the endoplasmic reticulum lumen. It carries out the reaction a carboxylic ester + H2O = an alcohol + a carboxylate + H(+). Its function is as follows. Involved in the detoxification of xenobiotics and in the activation of ester and amide prodrugs. Involved in the extracellular metabolism of lung surfactant. This chain is Carboxylesterase 1C (Ces1c), found in Rattus norvegicus (Rat).